The sequence spans 90 residues: Barrier-to-autointegration factor-like protein (90 aa).

As to quaternary structure, homodimer. Heterodimerizes with BANF1.

The protein resides in the nucleus. The protein localises to the cytoplasm. In terms of biological role, may play a role in BANF1 regulation and influence tissue-specific roles of BANF1. The polypeptide is Barrier-to-autointegration factor-like protein (Banf2) (Mus musculus (Mouse)).